We begin with the raw amino-acid sequence, 122 residues long: Large ribosomal subunit protein uL14 (122 aa).

This sequence belongs to the universal ribosomal protein uL14 family. As to quaternary structure, part of the 50S ribosomal subunit. Forms a cluster with proteins L3 and L19. In the 70S ribosome, L14 and L19 interact and together make contacts with the 16S rRNA in bridges B5 and B8.

Its function is as follows. Binds to 23S rRNA. Forms part of two intersubunit bridges in the 70S ribosome. The protein is Large ribosomal subunit protein uL14 of Flavobacterium johnsoniae (strain ATCC 17061 / DSM 2064 / JCM 8514 / BCRC 14874 / CCUG 350202 / NBRC 14942 / NCIMB 11054 / UW101) (Cytophaga johnsonae).